We begin with the raw amino-acid sequence, 178 residues long: Caveolin-1 (178 aa).

Position 2 is an N-acetylserine (Ser-2). Residue Ser-2 is modified to Phosphoserine. Positions 2 to 94 (SGGKYVDSEG…WKASFTTFTV (93 aa)) are required for homooligomerization. The Cytoplasmic segment spans residues 2–104 (SGGKYVDSEG…TKYWFYRLLS (103 aa)). The residue at position 5 (Lys-5) is an N6-acetyllysine; alternate. Lys-5 participates in a covalent cross-link: Glycyl lysine isopeptide (Lys-Gly) (interchain with G-Cter in ubiquitin); alternate. Residue Tyr-6 is modified to Phosphotyrosine. Position 9 is a phosphoserine (Ser-9). The residue at position 14 (Tyr-14) is a Phosphotyrosine; by ABL1. A Phosphotyrosine modification is found at Tyr-25. Residues Lys-26, Lys-30, Lys-39, Lys-47, and Lys-57 each participate in a glycyl lysine isopeptide (Lys-Gly) (interchain with G-Cter in ubiquitin) cross-link. The segment at 82–94 (DGIWKASFTTFTV) is interaction with CAVIN3. The helical intramembrane region spans 105–125 (ALFGIPMALIWGIYFAILSFL). The Cytoplasmic segment spans residues 126–178 (HIWAVVPCIKSFLIEIQCISRVYSIYVHTFCDPLFEAIGKIFSNVRINLQKEI). The interval 131–142 (VPCIKSFLIEIQ) is interacts with SPRY1, SPRY2, SPRY3 and SPRY4. S-palmitoyl cysteine attachment occurs at residues Cys-133, Cys-143, and Cys-156. Residues 149–160 (SIYVHTFCDPLF) are interacts with SPRY1, SPRY2, and SPRY4. Residues 167 to 178 (FSNVRINLQKEI) form an interacts with SPRY1, SPRY2, SPRY3 and SPRY4 region.

The protein belongs to the caveolin family. In terms of assembly, homooligomer. Interacts with GLIPR2. Interacts with NOSTRIN. Interacts with SNAP25 and STX1A. Interacts (via the N-terminus) with DPP4; the interaction is direct. Interacts with CTNNB1, CDH1 and JUP. Interacts with PACSIN2; this interaction induces membrane tubulation. Interacts with SLC7A9. Interacts with BMX and BTK. Interacts with TGFBR1. Interacts with CAVIN3 (via leucine-zipper domain) in a cholesterol-sensitive manner. Interacts with CAVIN1. Interacts with EHD2 in a cholesterol-dependent manner. Forms a ternary complex with UBXN6 and VCP; mediates CAV1 targeting to lysosomes for degradation. Interacts with ABCG1; this interaction regulates ABCG1-mediated cholesterol efflux. Interacts with NEU3; this interaction enhances NEU3 sialidase activity within caveola. Interacts (via C-terminus) with SPRY1, SPRY2 (via C-terminus), SPRY3, and SPRY4. Interacts with IGFBP5; this interaction allows trafficking of IGFBP5 from the plasma membrane to the nucleus. In terms of processing, phosphorylated at Tyr-14 by ABL1 in response to oxidative stress. Post-translationally, ubiquitinated. Undergo monoubiquitination and multi- and/or polyubiquitination. Monoubiquitination of N-terminal lysines promotes integration in a ternary complex with UBXN6 and VCP which promotes oligomeric CAV1 targeting to lysosomes for degradation. Ubiquitinated by ZNRF1; leading to degradation and modulation of the TLR4-mediated immune response.

Its subcellular location is the golgi apparatus membrane. The protein resides in the cell membrane. The protein localises to the membrane. It localises to the caveola. It is found in the membrane raft. May act as a scaffolding protein within caveolar membranes. Forms a stable heterooligomeric complex with CAV2 that targets to lipid rafts and drives caveolae formation. Mediates the recruitment of CAVIN proteins (CAVIN1/2/3/4) to the caveolae. Interacts directly with G-protein alpha subunits and can functionally regulate their activity. Involved in the costimulatory signal essential for T-cell receptor (TCR)-mediated T-cell activation. Its binding to DPP4 induces T-cell proliferation and NF-kappa-B activation in a T-cell receptor/CD3-dependent manner. Recruits CTNNB1 to caveolar membranes and may regulate CTNNB1-mediated signaling through the Wnt pathway. Negatively regulates TGFB1-mediated activation of SMAD2/3 by mediating the internalization of TGFBR1 from membrane rafts leading to its subsequent degradation. Binds 20(S)-hydroxycholesterol (20(S)-OHC). This chain is Caveolin-1 (CAV1), found in Equus caballus (Horse).